The primary structure comprises 388 residues: Succinate--CoA ligase [ADP-forming] subunit beta (388 aa).

An ATP-grasp domain is found at 9–245; it reads KELLASYGLP…KSQENERELK (237 aa). ATP is bound by residues lysine 46, 53–55, glutamate 100, tyrosine 103, and glutamate 108; that span reads GRG. Residues asparagine 200 and aspartate 214 each contribute to the Mg(2+) site. Substrate is bound by residues asparagine 265 and 322–324; that span reads GIV.

Belongs to the succinate/malate CoA ligase beta subunit family. In terms of assembly, heterotetramer of two alpha and two beta subunits. The cofactor is Mg(2+).

The enzyme catalyses succinate + ATP + CoA = succinyl-CoA + ADP + phosphate. It catalyses the reaction GTP + succinate + CoA = succinyl-CoA + GDP + phosphate. It participates in carbohydrate metabolism; tricarboxylic acid cycle; succinate from succinyl-CoA (ligase route): step 1/1. Its function is as follows. Succinyl-CoA synthetase functions in the citric acid cycle (TCA), coupling the hydrolysis of succinyl-CoA to the synthesis of either ATP or GTP and thus represents the only step of substrate-level phosphorylation in the TCA. The beta subunit provides nucleotide specificity of the enzyme and binds the substrate succinate, while the binding sites for coenzyme A and phosphate are found in the alpha subunit. This Neisseria meningitidis serogroup A / serotype 4A (strain DSM 15465 / Z2491) protein is Succinate--CoA ligase [ADP-forming] subunit beta.